The following is a 724-amino-acid chain: Propionyl-CoA carboxylase alpha chain, mitochondrial (724 aa).

The N-terminal 48 residues, 1–48, are a transit peptide targeting the mitochondrion; that stretch reads MAGQWVRTVALLAARRHWRRSSQQQLLGTLKHAPVYSYQCLVVSRSLS. In terms of domain architecture, Biotin carboxylation spans 58–505; the sequence is TFDKILIANR…STKFLSDVYP (448 aa). Residue Lys-61 is modified to N6-acetyllysine; alternate. Lys-61 is subject to N6-succinyllysine; alternate. N6-succinyllysine is present on Lys-115. Lys-146 bears the N6-acetyllysine; alternate mark. An N6-succinyllysine; alternate modification is found at Lys-146. Residue Lys-150 is modified to N6-acetyllysine. Lys-173 contributes to the ATP binding site. In terms of domain architecture, ATP-grasp spans 177–374; sequence KLLAKRAKVN…LVQEMILVAK (198 aa). Position 184 is an N6-succinyllysine (Lys-184). Lys-196 is modified (N6-acetyllysine; alternate). Residue Lys-196 is modified to N6-succinyllysine; alternate. Residues 205–266, Glu-257, and Asn-292 contribute to the ATP site; that span reads AREI…PRHI. Ser-248 carries the post-translational modification Phosphoserine. Lys-258 is subject to N6-succinyllysine. At Lys-324 the chain carries N6-acetyllysine; alternate. Lys-324 is modified (N6-succinyllysine; alternate). Mg(2+) is bound by residues Glu-332, Glu-345, and Asn-347. Glu-332, Glu-345, and Asn-347 together coordinate Mn(2+). Arg-349 is an active-site residue. An N6-succinyllysine mark is found at Lys-381 and Lys-403. Phe-405 lines the biotin pocket. Lys-492 carries the post-translational modification N6-acetyllysine. 4 positions are modified to N6-succinyllysine: Lys-498, Lys-509, Lys-554, and Lys-644. A Biotinyl-binding domain is found at 645-724; that stretch reads FMLEKVPKDT…GEGDLLVELE (80 aa). Lys-690 carries the post-translational modification N6-biotinyllysine; by HLCS.

The holoenzyme is a dodecamer composed of 6 PCCA/alpha subunits and 6 PCCB/beta subunits. Interacts (via the biotin carboxylation domain) with SIRT4. Interacts with SIRT3 and SIRT5. Mg(2+) is required as a cofactor. The cofactor is Mn(2+). Requires biotin as cofactor. Post-translationally, acetylated. The biotin cofactor is covalently attached to the C-terminal biotinyl-binding domain and is required for the catalytic activity. Biotinylation is catalyzed by HLCS.

It is found in the mitochondrion matrix. The enzyme catalyses propanoyl-CoA + hydrogencarbonate + ATP = (S)-methylmalonyl-CoA + ADP + phosphate + H(+). The catalysed reaction is butanoyl-CoA + hydrogencarbonate + ATP = (2S)-ethylmalonyl-CoA + ADP + phosphate + H(+). Its pathway is metabolic intermediate metabolism; propanoyl-CoA degradation; succinyl-CoA from propanoyl-CoA: step 1/3. In terms of biological role, this is one of the 2 subunits of the biotin-dependent propionyl-CoA carboxylase (PCC), a mitochondrial enzyme involved in the catabolism of odd chain fatty acids, branched-chain amino acids isoleucine, threonine, methionine, and valine and other metabolites. Propionyl-CoA carboxylase catalyzes the carboxylation of propionyl-CoA/propanoyl-CoA to D-methylmalonyl-CoA/(S)-methylmalonyl-CoA. Within the holoenzyme, the alpha subunit catalyzes the ATP-dependent carboxylation of the biotin carried by the biotin carboxyl carrier (BCC) domain, while the beta subunit then transfers the carboxyl group from carboxylated biotin to propionyl-CoA. Propionyl-CoA carboxylase also significantly acts on butyryl-CoA/butanoyl-CoA, which is converted to ethylmalonyl-CoA/(2S)-ethylmalonyl-CoA. Other alternative minor substrates include (2E)-butenoyl-CoA/crotonoyl-CoA. In Mus musculus (Mouse), this protein is Propionyl-CoA carboxylase alpha chain, mitochondrial.